The primary structure comprises 295 residues: Non-selective voltage-gated ion channel VDAC2 (295 aa).

ATP-binding residues include K24 and K32. Position 32 is an N6-acetyllysine; alternate (K32). K32 carries the post-translational modification N6-succinyllysine; alternate. A Glycyl lysine isopeptide (Lys-Gly) (interchain with G-Cter in ubiquitin); alternate cross-link involves residue K32. 2 consecutive transmembrane segments (beta stranded) span residues 38–47 (LVKLDVKTKS) and 51–59 (VEFSTSGSS). Glycyl lysine isopeptide (Lys-Gly) (interchain with G-Cter in ubiquitin) cross-links involve residues K65 and K73. 4 beta stranded membrane-spanning segments follow: residues 66 to 76 (VSGTLETKYKW), 81 to 88 (LTFTEKWN), 92 to 101 (TLGTEIAIED), and 107 to 116 (LKLTFDTTFS). K121 bears the N6-acetyllysine; alternate mark. K121 participates in a covalent cross-link: Glycyl lysine isopeptide (Lys-Gly) (interchain with G-Cter in ubiquitin); alternate. Residues K122 and K125 each participate in a glycyl lysine isopeptide (Lys-Gly) (interchain with G-Cter in ubiquitin) cross-link. Beta stranded transmembrane passes span 123-132 (SGKIKSAYKR), 135-142 (INLGCDVD), 149-157 (AIHGSAVFG), and 162-170 (LAGYQMTFD). Residue K173 forms a Glycyl lysine isopeptide (Lys-Gly) (interchain with G-Cter in ubiquitin) linkage. 6 beta stranded membrane passes run 175-187 (KLTR…GYRT), 190-197 (FQLHTNVN), 201-210 (EFGGSIYQKV), 214-223 (FDTSVNLAWT), 230-239 (RFGIAAKYQL), and 243-250 (ASISAKVN). S205 is modified (phosphoserine). S252 bears the Phosphoserine mark. Residues 254–256 (LIG) and 272–276 (SALVD) each bind NAD(+). Beta stranded transmembrane passes span 254–263 (LIGVGYTQTL) and 266–275 (GVKLTLSALV). K278 is subject to N6-acetyllysine; alternate. K278 is covalently cross-linked (Glycyl lysine isopeptide (Lys-Gly) (interchain with G-Cter in ubiquitin); alternate). The beta stranded transmembrane segment at 285-294 (HKLGLALELE) threads the bilayer. A Glycyl lysine isopeptide (Lys-Gly) (interchain with G-Cter in ubiquitin) cross-link involves residue K286.

It belongs to the eukaryotic mitochondrial porin family. Monomer, homodimer and higher order oligomers; formation of higher order structures is necessary for scramblase activity. Interacts with ARMC12 in a TBC1D21-dependent manner. Interacts with KLC3. Interacts with SPATA33. Interacts with PPP3CC in a SPATA33-dependent manner. Post-translationally, ubiquitinated by PRKN during mitophagy, leading to its degradation and enhancement of mitophagy. Deubiquitinated by USP30.

The protein localises to the mitochondrion outer membrane. Its subcellular location is the membrane. The catalysed reaction is chloride(in) = chloride(out). It carries out the reaction K(+)(in) = K(+)(out). The enzyme catalyses a 1,2-diacyl-sn-glycero-3-phospho-L-serine(in) = a 1,2-diacyl-sn-glycero-3-phospho-L-serine(out). It catalyses the reaction a 1,2-diacyl-sn-glycero-3-phosphocholine(in) = a 1,2-diacyl-sn-glycero-3-phosphocholine(out). The catalysed reaction is a 1,2-diacyl-sn-glycero-3-phospho-(1D-myo-inositol)(in) = a 1,2-diacyl-sn-glycero-3-phospho-(1D-myo-inositol)(out). Its function is as follows. Non-selective voltage-gated ion channel that mediates the transport of anions and cations through the mitochondrion outer membrane and plasma membrane. The channel adopts an open conformation at zero mV and a closed conformation at both positive and negative potentials. There are two populations of channels; the main that functions in a lower open-state conductance with lower ion selectivity, that switch, in a voltage-dependent manner, from the open to a low-conducting 'closed' state and the other that has a normal ion selectivity in the typical high conductance, 'open' state. Binds various lipids, including the sphingolipid ceramide, the phospholipid phosphatidylcholine, and the sterols cholesterol and oxysterol. Binding of ceramide promotes the mitochondrial outer membrane permeabilization (MOMP) apoptotic pathway. In terms of biological role, catalyzes the scrambling of phospholipids across the outer mitochondrial membrane; the mechanism is unrelated to channel activity and is capable of translocating both anionic and zwitterionic phospholipids. The polypeptide is Non-selective voltage-gated ion channel VDAC2 (Mesocricetus auratus (Golden hamster)).